Consider the following 362-residue polypeptide: Severin (362 aa).

The Gelsolin-like 1 repeat unit spans residues 53 to 102; sequence FKVVPVPESSYGKFYDGDSYIILHTFKEGNSLKHDIHFFLGTFTTQDEAG. 162 to 170 lines the a 1,2-diacyl-sn-glycero-3-phospho-(1D-myo-inositol-4,5-bisphosphate) pocket; the sequence is RLLHISGDK. Gelsolin-like repeat units follow at residues 172-212 and 280-323; these read AKVA…QEKN and LKFS…NEKK.

This sequence belongs to the villin/gelsolin family.

Severin blocks the ends of F-actin and causes the fragmentation and depolymerization of actin filaments in a Ca(2+) dependent manner. In Dictyostelium discoideum (Social amoeba), this protein is Severin (sevA).